Consider the following 159-residue polypeptide: 17.7 kDa class I heat shock protein (159 aa).

Residues Asp-45–Gly-159 form the sHSP domain.

Belongs to the small heat shock protein (HSP20) family. May form oligomeric structures.

The protein localises to the cytoplasm. The chain is 17.7 kDa class I heat shock protein (HSP17.7) from Oryza sativa subsp. japonica (Rice).